A 902-amino-acid polypeptide reads, in one-letter code: Proline-rich transmembrane protein 4 (902 aa).

The N-terminal stretch at methionine 1–alanine 18 is a signal peptide. Disordered regions lie at residues phenylalanine 120 to arginine 149 and proline 262 to proline 337. The segment covering serine 125 to threonine 139 has biased composition (low complexity). Residues serine 271–serine 301 are compositionally biased toward polar residues. A run of 5 helical transmembrane segments spans residues alanine 371–tryptophan 391, cysteine 393–threonine 413, alanine 431–leucine 451, proline 465–glycine 485, and glycine 501–glycine 521. Serine 642 is subject to Phosphoserine. 3 disordered regions span residues glycine 700 to phenylalanine 721, lysine 771 to glycine 811, and valine 836 to leucine 872. Positions alanine 703 to cysteine 717 are enriched in polar residues. Pro residues predominate over residues serine 786 to tryptophan 798. Low complexity-rich tracts occupy residues proline 799–glycine 811 and serine 843–serine 854.

The protein localises to the membrane. The chain is Proline-rich transmembrane protein 4 (Prrt4) from Rattus norvegicus (Rat).